We begin with the raw amino-acid sequence, 452 residues long: Chloride/fluoride channel protein (452 aa).

The next 10 membrane-spanning stretches (helical) occupy residues tryptophan 23–leucine 43, tryptophan 57–glycine 77, isoleucine 97–glycine 117, phenylalanine 160–isoleucine 180, leucine 188–valine 208, leucine 222–phenylalanine 242, proline 264–isoleucine 284, valine 315–glycine 337, leucine 344–phenylalanine 364, and isoleucine 386–histidine 408.

The protein belongs to the chloride channel (TC 2.A.49) family.

The protein resides in the cell membrane. In terms of biological role, transports chloride and fluoride with similar efficiency. This Pseudomonas syringae pv. tomato (strain ATCC BAA-871 / DC3000) protein is Chloride/fluoride channel protein (eriC).